A 642-amino-acid chain; its full sequence is Threonine--tRNA ligase (642 aa).

Residues Met-1–Thr-61 enclose the TGS domain. Positions Asp-243 to Pro-534 are catalytic. Lys-286 bears the N6-acetyllysine mark. Zn(2+) contacts are provided by Cys-334, His-385, and His-511.

The protein belongs to the class-II aminoacyl-tRNA synthetase family. Homodimer. Requires Zn(2+) as cofactor.

Its subcellular location is the cytoplasm. It catalyses the reaction tRNA(Thr) + L-threonine + ATP = L-threonyl-tRNA(Thr) + AMP + diphosphate + H(+). Catalyzes the attachment of threonine to tRNA(Thr) in a two-step reaction: L-threonine is first activated by ATP to form Thr-AMP and then transferred to the acceptor end of tRNA(Thr). Also edits incorrectly charged L-seryl-tRNA(Thr). This is Threonine--tRNA ligase from Escherichia coli O9:H4 (strain HS).